We begin with the raw amino-acid sequence, 793 residues long: Protein smoothened (793 aa).

The N-terminal stretch at 1–30 (MAAGRPVRGPELAPRRLLQLLLLVLLGGRG) is a signal peptide. The Extracellular segment spans residues 31–237 (RGAALSGNVT…EAEHQDMHSY (207 aa)). The tract at residues 35–61 (LSGNVTGPGPRSAGGSARRNAPVTSPP) is disordered. Asn-38 is a glycosylation site (N-linked (GlcNAc...) asparagine). Disulfide bonds link Cys-68–Cys-182, Cys-74–Cys-138, Cys-82–Cys-131, Cys-122–Cys-158, and Cys-151–Cys-173. The FZ domain occupies 69 to 185 (GRAAHCEPLR…DHFPEGCPNE (117 aa)). Cholesterol is bound at residue Asp-99. An N-linked (GlcNAc...) asparagine glycan is attached at Asn-192. Intrachain disulfides connect Cys-197–Cys-217, Cys-221–Cys-299, and Cys-318–Cys-394. The chain crosses the membrane as a helical span at residues 238 to 258 (IAAFGAVTGLCTLFTLATFVA). Over 259 to 266 (DWRNSNRY) the chain is Cytoplasmic. Residues 267–287 (PAVILFYVNACFFVGSIGWLA) traverse the membrane as a helical segment. The Extracellular segment spans residues 288–318 (QFMDGARREIVCRADGTMRFGEPTSSETLSC). A helical membrane pass occupies residues 319-339 (VIIFVIVYYALMAGVVWFVVL). The Cytoplasmic portion of the chain corresponds to 340 to 362 (TYAWHTSFKALGTTYQPLSGKTS). Residues 363–383 (YFHLLTWSLPFVLTVAILAVA) form a helical membrane-spanning segment. Residues 384 to 406 (QVDGDSVSGICFVGYKNYRYRAG) are Extracellular-facing. Tyr-398 is a binding site for cholesterol. The helical transmembrane segment at 407 to 427 (FVLAPIGLVLIVGGYFLIRGV) threads the bilayer. The Cytoplasmic portion of the chain corresponds to 428-455 (MTLFSIKSNHPGLLSEKAASKINETMLR). A helical membrane pass occupies residues 456-476 (LGIFGFLAFGFVLITFSCHFY). At 477–528 (DFFNQAEWERSFRDYVLCQANVTIGLPTKKPIPDCEIKNRPSLLVEKINLFA) the chain is on the extracellular side. Cys-494 and Cys-511 are oxidised to a cystine. A glycan (N-linked (GlcNAc...) asparagine) is linked at Asn-497. The helical transmembrane segment at 529–549 (MFGTGIAMSTWVWTKATLLIW) threads the bilayer. The tract at residues 542–573 (TKATLLIWRRTWCRLTGHSDDEPKRIKKSKMI) is interaction with BBS5 and BBS7. Topologically, residues 550 to 793 (RRTWCRLTGH…AELLDADSDF (244 aa)) are cytoplasmic. Residues Ser-560, Ser-578, and Ser-594 each carry the phosphoserine modification. The interval 574 to 657 (AKAFSKRREL…TPVPPEEQAN (84 aa)) is required for interaction with PRKACA. The tract at residues 585-597 (QNPGQELSFSMHT) is interaction with DLG5. Thr-597 bears the Phosphothreonine mark. Residues Ser-599 and Ser-642 each carry the phosphoserine modification. Residues Thr-644 and Thr-648 each carry the phosphothreonine modification. Ser-666 bears the Phosphoserine mark. The segment covering 674-684 (GRKKKRRKRKK) has biased composition (basic residues). The disordered stretch occupies residues 674-702 (GRKKKRRKRKKEVCPLGPAPELHHSAPVP).

This sequence belongs to the G-protein coupled receptor Fz/Smo family. Homodimer. Interacts (via C-terminus) with protein kinase A catalytic subunit PRKACA; interacts with free PRKACA subunits and the interaction leads to sequestration of PRKACA at the membrane, preventing PRKACA-mediated phosphorylation of GLI transcription factors. Interacts with ARRB2. Interacts with KIF7. Interacts with BBS5 and BBS7; the interactions are indicative for the association of SMO with the BBsome complex to facilitate ciliary localization of SMO. Interacts with DLG5 and SDCBP. Interacts with GAS8/DRC4. In terms of processing, phosphorylation by GRK kinases is required for interaction with protein kinase A catalytic subunit PRKACA. As to expression, in embryo, found in the early neural folds and neural tube, pre-somitic mesoderm and somites, developing limb bud, gut, eye, testes, cartilage, muscle, lung, epiglottis, thymus, tongue, jaw, taste buds, teeth, and skin. In adult, found in multiple tissues including heart, brain, liver, lung, skeletal muscle, kidney and testis.

It localises to the cell membrane. The protein resides in the cell projection. The protein localises to the cilium. In terms of biological role, g protein-coupled receptor which associates with the patched protein (PTCH) to transduce hedgehog protein signaling. Binding of sonic hedgehog (SHH) to its receptor patched prevents inhibition of smoothened (SMO) by patched. When active, SMO binds to and sequesters protein kinase A catalytic subunit PRKACA at the cell membrane, preventing PRKACA-mediated phosphorylation of GLI transcription factors which releases the GLI proteins from PRKACA-mediated inhibition and allows for transcriptional activation of hedgehog pathway target genes. Required for the accumulation of KIF7, GLI2 and GLI3 in the cilia. Interacts with DLG5 at the ciliary base to induce the accumulation of KIF7 and GLI2 at the ciliary tip for GLI2 activation. This is Protein smoothened (Smo) from Rattus norvegicus (Rat).